Reading from the N-terminus, the 249-residue chain is ATP synthase subunit a, chloroplastic (249 aa).

Transmembrane regions (helical) follow at residues 40-60 (QVLI…VLAI), 97-117 (VPFI…GALL), 136-156 (INTT…AGLS), 201-221 (LVVV…VMFL), and 222-242 (GLFT…AYIG).

This sequence belongs to the ATPase A chain family. F-type ATPases have 2 components, CF(1) - the catalytic core - and CF(0) - the membrane proton channel. CF(1) has five subunits: alpha(3), beta(3), gamma(1), delta(1), epsilon(1). CF(0) has four main subunits: a, b, b' and c.

Its subcellular location is the plastid. The protein localises to the chloroplast thylakoid membrane. Key component of the proton channel; it plays a direct role in the translocation of protons across the membrane. This chain is ATP synthase subunit a, chloroplastic, found in Lepidium virginicum (Virginia pepperweed).